The sequence spans 474 residues: Calcium/calmodulin-dependent protein kinase type IV (474 aa).

Phosphoserine; by autocatalysis is present on residues S11 and S12. In terms of domain architecture, Protein kinase spans 42 to 296 (FEVESELGRG…TFQALQHPWV (255 aa)). Residues 48–56 (LGRGATSIV) and K71 each bind ATP. T53 carries an O-linked (GlcNAc) threonine glycan. Residue S54 is glycosylated (O-linked (GlcNAc) serine). O-linked (GlcNAc) serine glycosylation occurs at S133. D160 (proton acceptor) is an active-site residue. S185 carries an O-linked (GlcNAc) serine glycan. T196 is modified (phosphothreonine; by CaMKK1 and CaMKK2). Residues 297–336 (TGKAANFVHMDTAQKKLQEFNARRKLKAAVKAVVASSRLG) form an autoinhibitory domain region. The interval 302 to 319 (NFVHMDTAQKKLQEFNAR) is PP2A-binding. The tract at residues 318–337 (ARRKLKAAVKAVVASSRLGS) is calmodulin-binding. At S332 the chain carries Phosphoserine; by autocatalysis. Residues 336-474 (GSASSSHTNI…PQQDAILPEY (139 aa)) form a disordered region. S337 is modified (phosphoserine). 3 O-linked (GlcNAc) serine glycosylation sites follow: S340, S341, and S352. Positions 342-356 (HTNIQESNKASSEAQ) are enriched in polar residues. Positions 360-392 (DGKDKTDPLENKMQAGDHEAAKAAADETMKLQS) are enriched in basic and acidic residues. Acidic residues predominate over residues 393–413 (EEVEEEEGVKEEEEEEEEEEE). Positions 431 to 454 (QEMKRNSEETLKSVEEEMDPKAEE) are enriched in basic and acidic residues. Residues S437 and S443 each carry the phosphoserine modification.

This sequence belongs to the protein kinase superfamily. CAMK Ser/Thr protein kinase family. CaMK subfamily. Monomer. Interacts with protein phosphatase 2A (PPP2CA/PPP2CB); the interaction is mutually exclusive with binding to Ca(2+)/calmodulin. Post-translationally, phosphorylated by CaMKK1 and CaMKK2 on Thr-196. Dephosphorylated by protein phosphatase 2A. Autophosphorylated on Ser-11 and Ser-12. Glycosylation at Ser-185 modulates the phosphorylation of CaMK4 at Thr-196 and negatively regulates its activity toward CREB1 in basal conditions and during early inomycin stimulation. In terms of processing, the N-terminus of calspermin is blocked. Isoform 1 is expressed in brain and isoform 2 is testis specific.

Its subcellular location is the cytoplasm. It is found in the nucleus. The catalysed reaction is L-seryl-[protein] + ATP = O-phospho-L-seryl-[protein] + ADP + H(+). The enzyme catalyses L-threonyl-[protein] + ATP = O-phospho-L-threonyl-[protein] + ADP + H(+). With respect to regulation, activated by Ca(2+)/calmodulin. Binding of calmodulin results in conformational change that relieves intrasteric autoinhibition and allows phosphorylation of Thr-196 within the activation loop by CaMKK1 or CaMKK2. Phosphorylation of Thr-196 results in a 10-20-fold increase in total activity to generate Ca(2+)/calmodulin-independent activity. Autophosphorylation of the N-terminus Ser-11 and Ser-12 is required for full activation. Inactivated by protein phosphatase 2A (PPP2CA/PPP2CB) which dephosphorylates Thr-196, thereby terminating autonomous activity and helping to maintain the enzyme in its autoinhibited state. In terms of biological role, calcium/calmodulin-dependent protein kinase that operates in the calcium-triggered CaMKK-CaMK4 signaling cascade and regulates, mainly by phosphorylation, the activity of several transcription activators, such as CREB1, MEF2D, JUN and RORA, which play pivotal roles in immune response, inflammation, and memory consolidation. In the thymus, regulates the CD4(+)/CD8(+) double positive thymocytes selection threshold during T-cell ontogeny. In CD4 memory T-cells, is required to link T-cell antigen receptor (TCR) signaling to the production of IL2, IFNG and IL4 (through the regulation of CREB and MEF2). Regulates the differentiation and survival phases of osteoclasts and dendritic cells (DCs). Mediates DCs survival by linking TLR4 and the regulation of temporal expression of BCL2. Phosphorylates the transcription activator CREB1 on 'Ser-133' in hippocampal neuron nuclei and contribute to memory consolidation and long term potentiation (LTP) in the hippocampus. Can activate the MAP kinases MAPK1/ERK2, MAPK8/JNK1 and MAPK14/p38 and stimulate transcription through the phosphorylation of ELK1 and ATF2. Can also phosphorylate in vitro CREBBP, PRM2, MEF2A and STMN1/OP18. Its function is as follows. Heat-stable, acidic, calmodulin-binding protein. In Rattus norvegicus (Rat), this protein is Calcium/calmodulin-dependent protein kinase type IV (Camk4).